We begin with the raw amino-acid sequence, 112 residues long: Ribonuclease P protein component (112 aa).

The protein belongs to the RnpA family. As to quaternary structure, consists of a catalytic RNA component (M1 or rnpB) and a protein subunit.

The catalysed reaction is Endonucleolytic cleavage of RNA, removing 5'-extranucleotides from tRNA precursor.. Its function is as follows. RNaseP catalyzes the removal of the 5'-leader sequence from pre-tRNA to produce the mature 5'-terminus. It can also cleave other RNA substrates such as 4.5S RNA. The protein component plays an auxiliary but essential role in vivo by binding to the 5'-leader sequence and broadening the substrate specificity of the ribozyme. The protein is Ribonuclease P protein component of Mycoplasma mobile (strain ATCC 43663 / 163K / NCTC 11711) (Mesomycoplasma mobile).